Consider the following 412-residue polypeptide: Translation initiation factor 2 subunit gamma (412 aa).

Residues 8–205 (QAEMNIGMVG…AMYEHFEPPE (198 aa)) enclose the tr-type G domain. Positions 17 to 24 (GHVDHGKT) are G1. Mg(2+) contacts are provided by Asp20, Thr24, Gly45, and Ser47. 20-25 (DHGKTT) provides a ligand contact to GTP. Positions 45–49 (GISIR) are G2. Positions 60, 63, 72, and 75 each coordinate Zn(2+). Residues 89–92 (DSPG) are G3. GTP-binding positions include 145-148 (NKID) and 183-185 (SAQ). Residues 145–148 (NKID) form a G4 region. The tract at residues 183-185 (SAQ) is G5.

The protein belongs to the TRAFAC class translation factor GTPase superfamily. Classic translation factor GTPase family. EIF2G subfamily. As to quaternary structure, heterotrimer composed of an alpha, a beta and a gamma chain. The cofactor is Mg(2+).

The enzyme catalyses GTP + H2O = GDP + phosphate + H(+). Its function is as follows. eIF-2 functions in the early steps of protein synthesis by forming a ternary complex with GTP and initiator tRNA. The protein is Translation initiation factor 2 subunit gamma of Methanopyrus kandleri (strain AV19 / DSM 6324 / JCM 9639 / NBRC 100938).